Reading from the N-terminus, the 447-residue chain is Argininosuccinate synthase (447 aa).

ATP-binding positions include 17–25 and alanine 43; that span reads AFSGGLDTS. Residue tyrosine 99 coordinates L-citrulline. ATP contacts are provided by glycine 129 and threonine 131. The L-aspartate site is built by threonine 131, asparagine 135, and aspartate 136. Asparagine 135 contacts L-citrulline. Aspartate 136 serves as a coordination point for ATP. The L-citrulline site is built by arginine 139 and serine 192. Aspartate 194 lines the ATP pocket. L-citrulline-binding residues include threonine 201, glutamate 203, and glutamate 280.

It belongs to the argininosuccinate synthase family. Type 2 subfamily. In terms of assembly, homotetramer.

Its subcellular location is the cytoplasm. It catalyses the reaction L-citrulline + L-aspartate + ATP = 2-(N(omega)-L-arginino)succinate + AMP + diphosphate + H(+). Its pathway is amino-acid biosynthesis; L-arginine biosynthesis; L-arginine from L-ornithine and carbamoyl phosphate: step 2/3. The polypeptide is Argininosuccinate synthase (Salmonella dublin (strain CT_02021853)).